The sequence spans 197 residues: Negative modulator of initiation of replication (197 aa).

Belongs to the SeqA family. In terms of assembly, homodimer. Polymerizes to form helical filaments.

It localises to the cytoplasm. Functionally, negative regulator of replication initiation, which contributes to regulation of DNA replication and ensures that replication initiation occurs exactly once per chromosome per cell cycle. Binds to pairs of hemimethylated GATC sequences in the oriC region, thus preventing assembly of replication proteins and re-initiation at newly replicated origins. Repression is relieved when the region becomes fully methylated. The chain is Negative modulator of initiation of replication from Pseudoalteromonas translucida (strain TAC 125).